The primary structure comprises 217 residues: Translation initiation factor IF-3 (217 aa).

This sequence belongs to the IF-3 family. As to quaternary structure, monomer.

Its subcellular location is the cytoplasm. IF-3 binds to the 30S ribosomal subunit and shifts the equilibrium between 70S ribosomes and their 50S and 30S subunits in favor of the free subunits, thus enhancing the availability of 30S subunits on which protein synthesis initiation begins. In Synechococcus sp. (strain CC9902), this protein is Translation initiation factor IF-3.